Here is a 116-residue protein sequence, read N- to C-terminus: Propanediol dehydratase-reactivating factor small subunit (116 aa).

Mg(2+) is bound at residue glutamate 31.

It belongs to the DdrB/PduH family. Forms a heterotetramer PduG(2)/PduH(2). Requires Mg(2+) as cofactor.

The protein localises to the bacterial microcompartment. It catalyses the reaction ATP + H2O = ADP + phosphate + H(+). The protein operates within polyol metabolism; 1,2-propanediol degradation. Small subunit of the propanediol dehydratase-reactivating factor (DDR), which reactivates suicidally inhibited adenosylcobalamin-dependent propanediol dehydratase (diol dehydratase, DDH) found in the bacterial microcompartment (BMC) dedicated to 1,2-propanediol (1,2-PD) degradation. Reactivates inactivated DDH in the presence of ATP, Mg(2+) and free adenosylcobalamin (AdoCbl), by mediating the exchange of the tightly bound damaged cofactor AdoCbl for a free intact one. In terms of biological role, the 1,2-PD-specific bacterial microcompartment (BMC) concentrates low levels of 1,2-PD catabolic enzymes, concentrates volatile reaction intermediates thus enhancing pathway flux and keeps the level of toxic, mutagenic propionaldehyde low. The protein is Propanediol dehydratase-reactivating factor small subunit of Salmonella typhimurium (strain LT2 / SGSC1412 / ATCC 700720).